Here is a 75-residue protein sequence, read N- to C-terminus: Dermaseptin-related peptide (75 aa).

Residues 1–22 (MAFLNKSLLLVLFLGLVSLSIC) form the signal peptide. Residues 23–43 (EEERRENEDEEEQEDDEQSEM) constitute a propeptide that is removed on maturation. A disordered region spans residues 24–44 (EERRENEDEEEQEDDEQSEMR). Positions 30 to 40 (EDEEEQEDDEQ) are enriched in acidic residues. At Gln72 the chain carries Glutamine amide. Positions 74–75 (EQ) are excised as a propeptide.

Expressed by the skin glands.

It is found in the secreted. Its function is as follows. Has antibacterial activity against Gram-positive bacterium M.luteus NCT C2665 but not against Gram-negative bacterium E.coli K12D31. The protein is Dermaseptin-related peptide of Agalychnis callidryas (Red-eyed tree frog).